The primary structure comprises 538 residues: MTTSLQDGQSAAGRAGAQDSPLAVQVCRVAQGKGDAQDPAQVPGLHALSPASDATLRGAIDRRKMKDLDVLEKPPIPNPFPELCCSPLTSVLSAGLFPRANSRKKQVIKVYSEDETSRALEVPSDITARDVCQLLILKNHYVDDNSWTLFEHLSHIGLERTVEDHELPTEVLSHWGVEEDNKLYLRKNYAKYEFFKNPMYFFPEHMVSFAAEMNGDRSPTQILQVFLSSSTYPEIHGFLHAKEQGKKSWKKAYFFLRRSGLYFSTKGTSKEPRHLQLFSEFSTSHVYMSLAGKKKHGAPTPYGFCLKPNKAGGPRDLKMLCAEEEQSRTCWVTAIRLLKDGMQLYQNYMHPYQGRSACNSQSMSPMRSVSENSLVAMDFSGEKSRVIDNPTEALSVAVEEGLAWRKKGCLRLGNHGSPSAPSQSSAVNMALHRSQPWFHHRISRDEAQRLIIRQGPVDGVFLVRDSQSNPRTFVLSMSHGQKIKHYQIIPVEDDGELFHTLDDGHTKFTDLIQLVEFYQLNRGVLPCKLKHYCARMAV.

Positions Met1–Ser20 are disordered. Position 2 is an N-acetylthreonine (Thr2). The Ras-associating domain occupies Lys104 to Ala190. Positions Tyr232–Asp340 constitute a PH domain. Ser370 and Ser373 each carry phosphoserine. Positions Trp437–Cys533 constitute an SH2 domain.

It belongs to the GRB7/10/14 family. Interacts with the cytoplasmic domain of the autophosphorylated insulin receptor, through the SH2 domain. Interacts with GRB14 (via BPS domain); this interaction protects the tyrosines in the activation loop on INSR from dephosphorylation. Binds to the ankyrin repeat region of TNKS2 via its N-terminus. Interacts with activated NRAS. Interacts (via SH2 domain) with TEK/TIE2 (tyrosine phosphorylated). Post-translationally, phosphorylated on serine residues. Phosphorylated on tyrosine residues by TEK/TIE2.

The protein resides in the cytoplasm. It localises to the endosome membrane. Adapter protein which modulates coupling of cell surface receptor kinases with specific signaling pathways. Binds to, and suppresses signals from, the activated insulin receptor (INSR). Potent inhibitor of insulin-stimulated MAPK3 phosphorylation. Plays a critical role regulating PDPK1 membrane translocation in response to insulin stimulation and serves as an adapter protein to recruit PDPK1 to activated insulin receptor, thus promoting PKB/AKT1 phosphorylation and transduction of the insulin signal. The protein is Growth factor receptor-bound protein 14 (Grb14) of Mus musculus (Mouse).